A 516-amino-acid chain; its full sequence is MLEKTTLKNIILIHFLMFLAVVTAQTAPDEDTSAITRCTAEGTNPVRETDIPNPVNVGTIDDRSCYANYKESTVYGKTWGVYNITFDSNDFDTSLQPRIERSLSRSSETGIGSYARLTGVFRILEVGDTSGTSQDGTYLAQAKGKHTGGGGSPDPAICLYLAKPVYGTGEDADKQVSFDIYAERILYRGGEGDGREIVFLKNVKKDEETNFELEVGFKEDPNDVSKKIQYCNAVIGGDTFNWNIPEPERGTESGIRYGAYRVKGGRAQIRWANTTYQKVENVEVTNPGPIGDVYKLKNVATGQYLSDSGVSASAVIMSDSGEAQNNYWTFVESGSLFNIDNETFGILRAPGAGGPGGAYVVVSTTKEGPSSDGDKVWTIHYNESNDTYRFESGSSGRFMYQEINGNVTHISAMNTDDRSVWKAIAVESLSVDENAILASDVRVFPNPASDSFTISLKTINHVTVNIYDVLGNTIFKSEFNGDTIQIRNKGQFKAGVYLIQLTDKNNNKYHKKLIVK.

An N-terminal signal peptide occupies residues 1 to 24 (MLEKTTLKNIILIHFLMFLAVVTA). The cysteines at positions 38 and 65 are disulfide-linked. 6 residues coordinate Ca(2+): Gly-42, Asn-44, Asp-62, Ser-64, Ala-67, and Asn-68. Position 138 (Tyr-138) interacts with substrate. The active-site Proton acceptor is the Lys-143. Residues 191–195 (EGDGR) and 260–263 (YRVK) contribute to the substrate site. The active-site Proton donor/acceptor is Tyr-260. Positions 289–429 (PIGDVYKLKN…VWKAIAVESL (141 aa)) are ulvan-binding domain. Residues 430–516 (SVDENAILAS…NKYHKKLIVK (87 aa)) constitute a propeptide, removed by the type IX secretion system (T9SS).

This sequence belongs to the polysaccharide lyase 28 family. The cofactor is Ca(2+).

The protein localises to the secreted. Functionally, ulvan lyase involved in ulvan degradation. Ulvan is the main polysaccharide component of the Ulvales (green seaweed) cell wall. It is composed of disaccharide building blocks comprising 3-sulfated rhamnose (Rha3S) linked to D-glucuronic acid (GlcA), L-iduronic acid (IduA), or D-xylose (Xyl). Ulvan lyase catalyzes the endolytic cleavage of the glycosidic bond between Rha3S and the uronic acids GlcA or IduA, producing oligosaccharides that have unsaturated 4-deoxy-L-threo-hex-4-enopyranosiduronic acid (deltaUA) at the non-reducing end. This results eventually in the degradation of the ulvan polysaccharide into deltaUA-Rha3S disaccharides and deltaUA-Rha3S-Xyl-Rha3S tetrasaccharides. The chain is Endo-acting ulvan lyase from Formosa agariphila (strain DSM 15362 / KCTC 12365 / LMG 23005 / KMM 3901 / M-2Alg 35-1).